The following is a 504-amino-acid chain: Probable cytochrome P450 6a21 (504 aa).

C449 is a heme binding site.

This sequence belongs to the cytochrome P450 family. It depends on heme as a cofactor.

The protein resides in the endoplasmic reticulum membrane. The protein localises to the microsome membrane. Functionally, may be involved in the metabolism of insect hormones and in the breakdown of synthetic insecticides. The chain is Probable cytochrome P450 6a21 (Cyp6a21) from Drosophila melanogaster (Fruit fly).